Reading from the N-terminus, the 874-residue chain is Alanine--tRNA ligase (874 aa).

Zn(2+) contacts are provided by histidine 563, histidine 567, cysteine 665, and histidine 669.

Belongs to the class-II aminoacyl-tRNA synthetase family. Zn(2+) serves as cofactor.

It is found in the cytoplasm. The catalysed reaction is tRNA(Ala) + L-alanine + ATP = L-alanyl-tRNA(Ala) + AMP + diphosphate. Its function is as follows. Catalyzes the attachment of alanine to tRNA(Ala) in a two-step reaction: alanine is first activated by ATP to form Ala-AMP and then transferred to the acceptor end of tRNA(Ala). Also edits incorrectly charged Ser-tRNA(Ala) and Gly-tRNA(Ala) via its editing domain. In Haemophilus ducreyi (strain 35000HP / ATCC 700724), this protein is Alanine--tRNA ligase.